The following is a 363-amino-acid chain: Aminomethyltransferase (363 aa).

Belongs to the GcvT family. The glycine cleavage system is composed of four proteins: P, T, L and H.

The enzyme catalyses N(6)-[(R)-S(8)-aminomethyldihydrolipoyl]-L-lysyl-[protein] + (6S)-5,6,7,8-tetrahydrofolate = N(6)-[(R)-dihydrolipoyl]-L-lysyl-[protein] + (6R)-5,10-methylene-5,6,7,8-tetrahydrofolate + NH4(+). Its function is as follows. The glycine cleavage system catalyzes the degradation of glycine. In Nitrosomonas eutropha (strain DSM 101675 / C91 / Nm57), this protein is Aminomethyltransferase.